A 491-amino-acid polypeptide reads, in one-letter code: Protein translocase subunit SecY (491 aa).

Topologically, residues 1–20 (MGWKEAAAPVLTRMPAVERP) are cytoplasmic. Residues 21–47 (EGHVPFRRKMYWTGGVLVLYFFLTNVP) form a helical membrane-spanning segment. Over 48 to 58 (LWGIQTAGNDF) the chain is Extracellular. The segment at residues 59 to 66 (FGQFRSLL) is an intramembrane region (helical). A discontinuously helical membrane pass occupies residues 59–87 (FGQFRSLLAGGQGTVLQLGIGPIVTASIV). The stretch at 67 to 78 (AGGQGTVLQLGI) is an intramembrane region. The segment at residues 79 to 87 (GPIVTASIV) is an intramembrane region (helical). The Cytoplasmic portion of the chain corresponds to 88–109 (LQLLGGANLLGLDTDNDPRDQA). Residues 110–134 (IYQGLQKFLVGVMVVLTGAPMVFLG) traverse the membrane as a helical segment. Topologically, residues 135–152 (NFLQPSQQLAQSMPGGAF) are extracellular. Residues 153–177 (GVEVLIFAQIAAGGILLLFMDEVIS) traverse the membrane as a helical segment. Residues 178 to 183 (KWGVGS) are Cytoplasmic-facing. The chain crosses the membrane as a helical span at residues 184-202 (GIGLFIVAGVSQSLVGGLV). Over 203–244 (FWEGGVGSQGLLPTWFDIIVGNVSNMPPLLSGSGIEFLLMQA) the chain is Extracellular. Residues 245–266 (GILGLLTTLFIYVVVVYAESVR) traverse the membrane as a helical segment. Topologically, residues 267-291 (VEIPLSHARVKGARGRFPVKLIYAS) are cytoplasmic. The helical transmembrane segment at 292-313 (VLPMILVRALQANIQFLGQILN) threads the bilayer. Over 314–365 (STLASMPTWLGVYGGNGQVTGGLFYYLAPIYSPNAWMWWTSGATAARWQVLI) the chain is Extracellular. The chain crosses the membrane as a helical span at residues 366–385 (RIAIDLSFMIIGGAIFAIFW). Residues 386–428 (VETADMGPDATARQIQNSGMQIPGFRKNQGVIEKVMERYIPQV) are Cytoplasmic-facing. Residues 429–447 (TVIGGALVGLLAVMANMLG) traverse the membrane as a helical segment. The Extracellular portion of the chain corresponds to 448–452 (TIGNV). Residues 453 to 467 (SGTGLLLTISITYKL) traverse the membrane as a helical segment. The Cytoplasmic segment spans residues 468-491 (YEEIAEEQMMEMHPMMREMFGGGD).

This sequence belongs to the SecY/SEC61-alpha family. Component of the Sec protein translocase complex. Heterotrimer consisting of alpha (SecY), beta (SecG) and gamma (SecE) subunits. The heterotrimers can form oligomers, although 1 heterotrimer is thought to be able to translocate proteins. Interacts with the ribosome. May interact with SecDF, and other proteins may be involved.

The protein localises to the cell membrane. Its function is as follows. The central subunit of the protein translocation channel SecYEG. Consists of two halves formed by TMs 1-5 and 6-10. These two domains form a lateral gate at the front which open onto the bilayer between TMs 2 and 7, and are clamped together by SecE at the back. The channel is closed by both a pore ring composed of hydrophobic SecY resides and a short helix (helix 2A) on the extracellular side of the membrane which forms a plug. The plug probably moves laterally to allow the channel to open. The ring and the pore may move independently. The chain is Protein translocase subunit SecY from Halobacterium salinarum (strain ATCC 700922 / JCM 11081 / NRC-1) (Halobacterium halobium).